Here is a 579-residue protein sequence, read N- to C-terminus: UPF0324 membrane protein DVU_2133 (579 aa).

Helical transmembrane passes span 26 to 45 (YWAI…LFLA), 193 to 215 (PFNI…AVGM), 225 to 243 (FLVG…LMMG), 250 to 272 (YWGI…TVGT), 305 to 327 (IGIP…TFIF), 369 to 391 (LTLA…PAFI), 401 to 423 (GGAW…AFLG), 436 to 456 (IQNV…CARV), 476 to 495 (FVLG…GSLG), 515 to 534 (LRNW…TNFR), and 549 to 571 (YVAG…FYIV).

This sequence belongs to the UPF0324 family.

The protein localises to the cell membrane. The chain is UPF0324 membrane protein DVU_2133 from Nitratidesulfovibrio vulgaris (strain ATCC 29579 / DSM 644 / CCUG 34227 / NCIMB 8303 / VKM B-1760 / Hildenborough) (Desulfovibrio vulgaris).